Reading from the N-terminus, the 98-residue chain is NADH-ubiquinone oxidoreductase chain 4L (98 aa).

3 consecutive transmembrane segments (helical) span residues 1–21 (MLAI…GVLV), 25–45 (HLMS…ILMT), and 57–79 (SMAP…ALLV).

This sequence belongs to the complex I subunit 4L family. In terms of assembly, core subunit of respiratory chain NADH dehydrogenase (Complex I) which is composed of 45 different subunits.

The protein localises to the mitochondrion inner membrane. The enzyme catalyses a ubiquinone + NADH + 5 H(+)(in) = a ubiquinol + NAD(+) + 4 H(+)(out). In terms of biological role, core subunit of the mitochondrial membrane respiratory chain NADH dehydrogenase (Complex I) which catalyzes electron transfer from NADH through the respiratory chain, using ubiquinone as an electron acceptor. Part of the enzyme membrane arm which is embedded in the lipid bilayer and involved in proton translocation. The sequence is that of NADH-ubiquinone oxidoreductase chain 4L (MT-ND4L) from Dasyurus hallucatus (Northern quoll).